Here is a 262-residue protein sequence, read N- to C-terminus: Phosphatidylglycerol--prolipoprotein diacylglyceryl transferase 1 (262 aa).

4 consecutive transmembrane segments (helical) span residues 15–35 (WYGIIIALGILIAMTLVSINA), 40–60 (LNFDVILDLFLWCFPFAIIGA), 83–103 (QGGLAIHGGIIGAFLTAFIYC), and 108–128 (VDFLAYADIVAPAFILAQGIG). Position 129 (Arg-129) interacts with a 1,2-diacyl-sn-glycero-3-phospho-(1'-sn-glycerol). 3 helical membrane-spanning segments follow: residues 169–189 (TFLYESIWDIFVAILLMIILY), 197–217 (GVVISAYISLYSLGRFFIEGL), and 229–249 (VAQLVSLLGIIIGIVAIIIIV).

This sequence belongs to the Lgt family.

The protein localises to the cell membrane. The enzyme catalyses L-cysteinyl-[prolipoprotein] + a 1,2-diacyl-sn-glycero-3-phospho-(1'-sn-glycerol) = an S-1,2-diacyl-sn-glyceryl-L-cysteinyl-[prolipoprotein] + sn-glycerol 1-phosphate + H(+). It participates in protein modification; lipoprotein biosynthesis (diacylglyceryl transfer). Functionally, catalyzes the transfer of the diacylglyceryl group from phosphatidylglycerol to the sulfhydryl group of the N-terminal cysteine of a prolipoprotein, the first step in the formation of mature lipoproteins. This chain is Phosphatidylglycerol--prolipoprotein diacylglyceryl transferase 1, found in Clostridium perfringens (strain 13 / Type A).